Reading from the N-terminus, the 124-residue chain is Chemotaxis protein CheY1 (124 aa).

The 119-residue stretch at 2 to 120 (KLLVVDDSST…VLKEKLEVVL (119 aa)) folds into the Response regulatory domain. Mg(2+) is bound by residues aspartate 7, aspartate 8, aspartate 53, and asparagine 55. Aspartate 53 carries the post-translational modification 4-aspartylphosphate.

Interacts (when phosphorylated) with FliM. Mg(2+) serves as cofactor. Post-translationally, phosphorylated by CheAY. Dephosphorylated (inactivated) by CheZ.

It localises to the cytoplasm. Chemotactic response regulator protein that modulates the rotation direction of bacterial flagellar motors. Plays an important role in the colonization and infection of Helicobacter pylori. Upon phosphorylation by CheA, interacts with the flagellar motor protein FliM to cause clockwise flagellar rotation and bacterial reversals, as opposed to straight swimming when CheY1 is not phosphorylated. This Helicobacter pylori (strain ATCC 700392 / 26695) (Campylobacter pylori) protein is Chemotaxis protein CheY1.